The following is a 585-amino-acid chain: CTP synthase (585 aa).

Positions 1–281 (MPALRKHPHT…DAYVVRRLNL (281 aa)) are amidoligase domain. S23 provides a ligand contact to CTP. S23 is a binding site for UTP. ATP-binding positions include 24–29 (SLGKGL) and D81. 2 residues coordinate Mg(2+): D81 and E155. CTP-binding positions include 162–164 (DIE), 202–207 (KTKPTQ), and K238. UTP-binding positions include 202 to 207 (KTKPTQ) and K238. Residues 306–554 (RIALVGKYID…VGAAVEYNNG (249 aa)) enclose the Glutamine amidotransferase type-1 domain. An L-glutamine-binding site is contributed by G369. The active-site Nucleophile; for glutamine hydrolysis is the C396. L-glutamine is bound by residues 397 to 400 (LGLQ), E419, and R480. Residues H527 and E529 contribute to the active site. The segment at 564 to 585 (IPTADHQSNGAEHALEDAPARG) is disordered. Residues 576–585 (HALEDAPARG) show a composition bias toward basic and acidic residues.

It belongs to the CTP synthase family. As to quaternary structure, homotetramer.

It carries out the reaction UTP + L-glutamine + ATP + H2O = CTP + L-glutamate + ADP + phosphate + 2 H(+). The enzyme catalyses L-glutamine + H2O = L-glutamate + NH4(+). It catalyses the reaction UTP + NH4(+) + ATP = CTP + ADP + phosphate + 2 H(+). Its pathway is pyrimidine metabolism; CTP biosynthesis via de novo pathway; CTP from UDP: step 2/2. Its activity is regulated as follows. Allosterically activated by GTP, when glutamine is the substrate; GTP has no effect on the reaction when ammonia is the substrate. The allosteric effector GTP functions by stabilizing the protein conformation that binds the tetrahedral intermediate(s) formed during glutamine hydrolysis. Inhibited by the product CTP, via allosteric rather than competitive inhibition. In terms of biological role, catalyzes the ATP-dependent amination of UTP to CTP with either L-glutamine or ammonia as the source of nitrogen. Regulates intracellular CTP levels through interactions with the four ribonucleotide triphosphates. The protein is CTP synthase of Mycolicibacterium gilvum (strain PYR-GCK) (Mycobacterium gilvum (strain PYR-GCK)).